A 128-amino-acid polypeptide reads, in one-letter code: MEIGKKYELNPHRIKSFIDISSSNANMVGIIQENGGWFEVKSILSLDGFDYVTEIICANGEIYNDDGMGDDYFELSEEEFYCFREYKEPTSEEDKVEDKVYDVTKIHCIVDENNVDEIIELLRKTFKA.

This is an uncharacterized protein from Escherichia coli (Bacteriophage LZ1).